We begin with the raw amino-acid sequence, 542 residues long: Gamma-terpinene synthase 1 (542 aa).

Aspartate 295 and aspartate 299 together coordinate Mn(2+). Residues 295–299 carry the DDXXD motif motif; that stretch reads DDVYD. Homodimerization regions lie at residues 301–307 and 373–410; these read YDTLDEL and EAKWYYAGYTPTLAEYLENAKVSISSPTIISQVYFTLP. Aspartate 439 and glutamate 447 together coordinate Mn(2+).

This sequence belongs to the terpene synthase family. Homodimer. It depends on Mn(2+) as a cofactor. Mg(2+) serves as cofactor. In terms of tissue distribution, mostly expressed in flowers and, to a lower extent, in leaves, especially in glandular trichomes.

It catalyses the reaction (2E)-geranyl diphosphate = gamma-terpinene + diphosphate. It carries out the reaction (2E)-geranyl diphosphate = alpha-terpinene + diphosphate. It participates in secondary metabolite biosynthesis; terpenoid biosynthesis. In terms of biological role, involved in the biosynthesis of phenolic monoterpenes natural products thymol and carvacrol which have a broad range of biological activities acting as antimicrobial compounds, insecticides, antioxidants and pharmaceutical agents. Monoterpene synthase which catalyzes the conversion of geranyl diphosphate (GPP) to gamma-terpinene and the minor products alpha-thujene, alpha-terpinene, myrcene, sabinene, (+)-R-limonene, alpha-pinene and alpha-phellandrene. In Thymus vulgaris (Thyme), this protein is Gamma-terpinene synthase 1.